Reading from the N-terminus, the 692-residue chain is Elongation factor G (692 aa).

One can recognise a tr-type G domain in the interval 8 to 283; sequence DRYRNIGIMA…AVVDFLPSPL (276 aa). Residues 17–24, 81–85, and 135–138 contribute to the GTP site; these read AHIDAGKT, DTPGH, and NKMD.

It belongs to the TRAFAC class translation factor GTPase superfamily. Classic translation factor GTPase family. EF-G/EF-2 subfamily.

It is found in the cytoplasm. In terms of biological role, catalyzes the GTP-dependent ribosomal translocation step during translation elongation. During this step, the ribosome changes from the pre-translocational (PRE) to the post-translocational (POST) state as the newly formed A-site-bound peptidyl-tRNA and P-site-bound deacylated tRNA move to the P and E sites, respectively. Catalyzes the coordinated movement of the two tRNA molecules, the mRNA and conformational changes in the ribosome. This Rhodospirillum rubrum (strain ATCC 11170 / ATH 1.1.1 / DSM 467 / LMG 4362 / NCIMB 8255 / S1) protein is Elongation factor G.